The primary structure comprises 38 residues: Large ribosomal subunit protein bL36 (38 aa).

It belongs to the bacterial ribosomal protein bL36 family.

The polypeptide is Large ribosomal subunit protein bL36 (Hahella chejuensis (strain KCTC 2396)).